The following is a 37-amino-acid chain: Photosystem I reaction center subunit IX (37 aa).

The helical transmembrane segment at 4 to 24 (FLTTAPVVAAIWFTLTAGILI) threads the bilayer.

It belongs to the PsaJ family.

It is found in the cellular thylakoid membrane. May help in the organization of the PsaE and PsaF subunits. The sequence is that of Photosystem I reaction center subunit IX from Synechococcus sp. (strain WH7803).